We begin with the raw amino-acid sequence, 145 residues long: Bacilliredoxin SH1401 (145 aa).

It belongs to the bacilliredoxin family.

The polypeptide is Bacilliredoxin SH1401 (Staphylococcus haemolyticus (strain JCSC1435)).